Reading from the N-terminus, the 216-residue chain is Probable GTP-binding protein EngB (216 aa).

An EngB-type G domain is found at 43 to 216; it reads DRIEVCFAGR…TLRSIIAHLD (174 aa). GTP is bound by residues 51–58, 78–82, 96–99, 163–166, and 197–199; these read GRSNVGKS, GRTQE, DLPG, TKAD, and TSS. Mg(2+) is bound by residues Ser-58 and Thr-80.

This sequence belongs to the TRAFAC class TrmE-Era-EngA-EngB-Septin-like GTPase superfamily. EngB GTPase family. The cofactor is Mg(2+).

In terms of biological role, necessary for normal cell division and for the maintenance of normal septation. In Ruegeria sp. (strain TM1040) (Silicibacter sp.), this protein is Probable GTP-binding protein EngB.